A 410-amino-acid polypeptide reads, in one-letter code: Alanine racemase (410 aa).

Positions 28 to 76 constitute an RPE1 insert domain; the sequence is VDFLHNVANKEEFAGNTSPRTAAYTLVREDASLGSTPKLPLGASYAKNL. The Proton acceptor; specific for D-alanine role is filled by lysine 83. N6-(pyridoxal phosphate)lysine is present on lysine 83. A substrate-binding site is contributed by arginine 182. The Proton acceptor; specific for L-alanine role is filled by tyrosine 305. Substrate is bound at residue methionine 353.

Belongs to the alanine racemase family. Pyridoxal 5'-phosphate is required as a cofactor.

It carries out the reaction L-alanine = D-alanine. It functions in the pathway amino-acid biosynthesis; D-alanine biosynthesis; D-alanine from L-alanine: step 1/1. Catalyzes the interconversion of L-alanine and D-alanine. May also act on other amino acids. The chain is Alanine racemase (alr) from Rickettsia bellii (strain RML369-C).